A 323-amino-acid polypeptide reads, in one-letter code: Small ribosomal subunit protein uS3 (323 aa).

Residues 17–86 (IDEFFADELG…DPQIDVQEVD (70 aa)) enclose the KH type-2 domain. Residues 251-303 (ADPGVSSEDEEVVTEPVDIGGDDEDVEDIEVVSDDSGNDTETVAEEVEELDAE) are disordered. A compositionally biased stretch (acidic residues) spans 270 to 303 (GGDDEDVEDIEVVSDDSGNDTETVAEEVEELDAE).

This sequence belongs to the universal ribosomal protein uS3 family. Part of the 30S ribosomal subunit.

Its function is as follows. Binds the lower part of the 30S subunit head. The polypeptide is Small ribosomal subunit protein uS3 (Haloquadratum walsbyi (strain DSM 16790 / HBSQ001)).